A 335-amino-acid chain; its full sequence is Meiotic expression up-regulated protein 14 (335 aa).

Its subcellular location is the cytoplasm. It localises to the cytoskeleton. It is found in the microtubule organizing center. The protein resides in the spindle pole body. The protein localises to the nucleus membrane. Its subcellular location is the prospore membrane. Has a role in nuclear division during meiosis II where it stabilizes the proper segregation of the spindle pole bodies. Also has a role in the formation and extension of the forespore membrane. In Schizosaccharomyces pombe (strain 972 / ATCC 24843) (Fission yeast), this protein is Meiotic expression up-regulated protein 14 (meu14).